The following is a 504-amino-acid chain: Nuclear hormone receptor family member nhr-80 (504 aa).

Residues S27 to P103 constitute a DNA-binding region (nuclear receptor). NR C4-type zinc fingers lie at residues C30–C50 and C66–C86. Residues S177–T192 are compositionally biased toward low complexity. The tract at residues S177–A199 is disordered. Residues E214–D466 form the NR LBD domain. The AF-2 stretch occupies residues L455 to D466.

It belongs to the nuclear hormone receptor family. In terms of assembly, interacts with nuclear hormone receptor nhr-49; the interaction is direct. In terms of tissue distribution, expressed in the intestine and in some head and tail neurons, as well as the ventral nerve cord.

The protein resides in the nucleus. In terms of biological role, transcription factor. Binds to regulatory elements and regulates transcription of target genes, including acyltransferase dgat-2. As part of a lysosome-to-nucleus retrograde lipid signaling pathway, acts as a direct nuclear receptor of oleoylethanolamide (OEA) and, acting in concert with nuclear hormone receptor nhr-49, activates the transcription of genes promoting longevity and mitochondrial beta-oxidation. Required to modulate expression of delta-9 fatty acid desaturases, thereby regulating lipid metabolism; in some contexts, acting in concert with nhr-49. Involved in modulation of lipid metabolism in response to the citrate-induced mitochondrial unfolded protein response (mtUPR), acting downstream of transcription factor dve-1 and ubiquitin-like protein 5. Plays a role in modulating mitochondrial morphology and function. Involved in positively modulating life-span in a germline-dependent manner, acting in concert with nuclear hormone receptor daf-12. Plays a role in transgenerational lipid accumulation in response to a high-fat diet. In Caenorhabditis elegans, this protein is Nuclear hormone receptor family member nhr-80.